The following is a 361-amino-acid chain: Lactate-binding periplasmic protein TTHA0766 (361 aa).

Positions Met1–Ala22 form a signal peptide, tat-type signal. The substrate site is built by Tyr101, Asn158, and Arg178. Residue Asn158 coordinates Ca(2+). Ca(2+)-binding residues include Asp216, Phe217, and Gln247. Substrate contacts are provided by residues Phe217 and Gln247–Asp250.

Belongs to the bacterial solute-binding protein 7 family. In terms of assembly, homodimer. The complex comprises the extracytoplasmic solute receptor protein TTHA0766, and the two putative transmembrane proteins TTHA0767 and TTHA0768.

It is found in the periplasm. In terms of biological role, part of the tripartite ATP-independent periplasmic (TRAP) transport system involved in the uptake of lactate. This protein specifically binds L-lactate. The protein is Lactate-binding periplasmic protein TTHA0766 of Thermus thermophilus (strain ATCC 27634 / DSM 579 / HB8).